Consider the following 842-residue polypeptide: Homeobox-leucine zipper protein REVOLUTA (842 aa).

The tract at residues 1-20 (MEMAVANHRERSSDSMNRHL) is disordered. Basic and acidic residues predominate over residues 7–20 (NHRERSSDSMNRHL). Positions 22–85 (SSGKYVRYTA…NRRCRDKQRK (64 aa)) form a DNA-binding region, homeobox. Positions 90-121 (LQSVNRKLSAMNKLLMEENDRLQKQVSQLVCE) form a coiled coil. The region spanning 151–379 (DANSPAGLLS…LAQESNGEVV (229 aa)) is the START domain.

It belongs to the HD-ZIP homeobox family. Class III subfamily. In terms of assembly, homodimer. Heterodimer with ZPR1, ZPR2, ZPR3 or ZPR4. Interacts with ESR1 and ESR2. Interacts with ZPR1, ZPR2, ZPR3 and ZPR4. Heterodimerization with ZPR3 prevents DNA binding by REV. Expressed in the interfascicular regions of stem and vascular bundles of young roots and leaves.

Its subcellular location is the nucleus. Functionally, probable transcription factor involved in the regulation of interfascicular fiber (cortical cells) and secondary xylem differentiation in the inflorescence stems. Required for lateral shoot meristems (LSMs) and flower meristems (FMs) initiation. May be involved in the determination of vascular patterning and organ polarity. Directly regulates the expression of AGO10, ZPR1, ZPR2, ZPR3 and ZPR4. Required to regulate adaxial-abaxial polarity and leaf axial patterning. This chain is Homeobox-leucine zipper protein REVOLUTA, found in Arabidopsis thaliana (Mouse-ear cress).